The sequence spans 1183 residues: DNA-directed RNA polymerase subunit beta (1183 aa).

This sequence belongs to the RNA polymerase beta chain family. In terms of assembly, the RNAP catalytic core consists of 2 alpha, 1 beta, 1 beta' and 1 omega subunit. When a sigma factor is associated with the core the holoenzyme is formed, which can initiate transcription.

The enzyme catalyses RNA(n) + a ribonucleoside 5'-triphosphate = RNA(n+1) + diphosphate. DNA-dependent RNA polymerase catalyzes the transcription of DNA into RNA using the four ribonucleoside triphosphates as substrates. This chain is DNA-directed RNA polymerase subunit beta, found in Staphylococcus aureus (strain Mu3 / ATCC 700698).